Consider the following 339-residue polypeptide: Phosphate acyltransferase (339 aa).

It belongs to the PlsX family. As to quaternary structure, homodimer. Probably interacts with PlsY.

It is found in the cytoplasm. It carries out the reaction a fatty acyl-[ACP] + phosphate = an acyl phosphate + holo-[ACP]. The protein operates within lipid metabolism; phospholipid metabolism. Catalyzes the reversible formation of acyl-phosphate (acyl-PO(4)) from acyl-[acyl-carrier-protein] (acyl-ACP). This enzyme utilizes acyl-ACP as fatty acyl donor, but not acyl-CoA. This Tolumonas auensis (strain DSM 9187 / NBRC 110442 / TA 4) protein is Phosphate acyltransferase.